A 36-amino-acid polypeptide reads, in one-letter code: Peruvianin-1 (36 aa).

The protein belongs to the germin family. Homohexamer, possibly consisting of a trimer of dimers. Post-translationally, glycosylated.

Its activity is regulated as follows. Inhibited by iodoacetamide and trans-epoxysuccinyl-L-leucylamido(4-guanidino)butane (E-64) but not by phenylmethylsulfonyl fluoride (PMSF), pepstatin-A, ethylenediamine tetra acetic acid (EDTA) or ethylene glycol tetraacetic acid (EGTA). Its function is as follows. Cysteine protease able to degrade azocasein and benzoyl-arginine-beta-naphtylamide (BANA) in vitro. This chain is Peruvianin-1, found in Thevetia peruviana (Yellow oleander).